Reading from the N-terminus, the 171-residue chain is 3-hydroxydecanoyl-[acyl-carrier-protein] dehydratase (171 aa).

Histidine 70 is a catalytic residue.

The protein belongs to the thioester dehydratase family. FabA subfamily. As to quaternary structure, homodimer.

The protein resides in the cytoplasm. The catalysed reaction is a (3R)-hydroxyacyl-[ACP] = a (2E)-enoyl-[ACP] + H2O. It carries out the reaction (3R)-hydroxydecanoyl-[ACP] = (2E)-decenoyl-[ACP] + H2O. The enzyme catalyses (2E)-decenoyl-[ACP] = (3Z)-decenoyl-[ACP]. The protein operates within lipid metabolism; fatty acid biosynthesis. Its function is as follows. Necessary for the introduction of cis unsaturation into fatty acids. Catalyzes the dehydration of (3R)-3-hydroxydecanoyl-ACP to E-(2)-decenoyl-ACP and then its isomerization to Z-(3)-decenoyl-ACP. Can catalyze the dehydratase reaction for beta-hydroxyacyl-ACPs with saturated chain lengths up to 16:0, being most active on intermediate chain length. The chain is 3-hydroxydecanoyl-[acyl-carrier-protein] dehydratase from Shewanella frigidimarina (strain NCIMB 400).